Reading from the N-terminus, the 1639-residue chain is Mediator of RNA polymerase II transcription subunit 14 (1639 aa).

An LXXLL motif 1 motif is present at residues L49–L53. Disordered stretches follow at residues G561 to S586 and L709 to H755. The span at S575–S586 shows a compositional bias: low complexity. The segment covering Q711 to P721 has biased composition (pro residues). Residues Q722–A748 show a composition bias toward low complexity. The short motif at L768–L772 is the LXXLL motif 2 element. 2 disordered regions span residues R1039–T1243 and M1558–N1639. 2 stretches are compositionally biased toward gly residues: residues G1062–M1088 and I1122–G1142. Residues G1189 to D1201 show a composition bias toward polar residues. Residues P1219–G1229 show a composition bias toward pro residues. Residues M1558 to G1579 show a composition bias toward gly residues. Residues V1589–Q1603 are compositionally biased toward low complexity. Over residues M1604–N1639 the composition is skewed to gly residues.

This sequence belongs to the Mediator complex subunit 14 family. In terms of assembly, component of the Mediator complex.

It localises to the nucleus. Component of the Mediator complex, a coactivator involved in the regulated transcription of nearly all RNA polymerase II-dependent genes. Mediator functions as a bridge to convey information from gene-specific regulatory proteins to the basal RNA polymerase II transcription machinery. Mediator is recruited to promoters by direct interactions with regulatory proteins and serves as a scaffold for the assembly of a functional preinitiation complex with RNA polymerase II and the general transcription factors. This is Mediator of RNA polymerase II transcription subunit 14 (MED14) from Anopheles gambiae (African malaria mosquito).